A 276-amino-acid polypeptide reads, in one-letter code: Acyl-[acyl-carrier-protein]--UDP-N-acetylglucosamine O-acyltransferase (276 aa).

The protein belongs to the transferase hexapeptide repeat family. LpxA subfamily. Homotrimer.

It localises to the cytoplasm. The catalysed reaction is a (3R)-hydroxyacyl-[ACP] + UDP-N-acetyl-alpha-D-glucosamine = a UDP-3-O-[(3R)-3-hydroxyacyl]-N-acetyl-alpha-D-glucosamine + holo-[ACP]. It participates in glycolipid biosynthesis; lipid IV(A) biosynthesis; lipid IV(A) from (3R)-3-hydroxytetradecanoyl-[acyl-carrier-protein] and UDP-N-acetyl-alpha-D-glucosamine: step 1/6. Its function is as follows. Involved in the biosynthesis of lipid A, a phosphorylated glycolipid that anchors the lipopolysaccharide to the outer membrane of the cell. This chain is Acyl-[acyl-carrier-protein]--UDP-N-acetylglucosamine O-acyltransferase, found in Synechocystis sp. (strain ATCC 27184 / PCC 6803 / Kazusa).